The sequence spans 241 residues: UDP-2,3-diacylglucosamine hydrolase (241 aa).

Mn(2+) contacts are provided by aspartate 8, histidine 10, aspartate 41, asparagine 79, and histidine 114. 79 to 80 (NR) serves as a coordination point for substrate. Residues aspartate 122, lysine 164, lysine 167, and histidine 195 each coordinate substrate. Mn(2+)-binding residues include histidine 195 and histidine 197.

The protein belongs to the LpxH family. It depends on Mn(2+) as a cofactor.

The protein resides in the cell inner membrane. The enzyme catalyses UDP-2-N,3-O-bis[(3R)-3-hydroxytetradecanoyl]-alpha-D-glucosamine + H2O = 2-N,3-O-bis[(3R)-3-hydroxytetradecanoyl]-alpha-D-glucosaminyl 1-phosphate + UMP + 2 H(+). The protein operates within glycolipid biosynthesis; lipid IV(A) biosynthesis; lipid IV(A) from (3R)-3-hydroxytetradecanoyl-[acyl-carrier-protein] and UDP-N-acetyl-alpha-D-glucosamine: step 4/6. Functionally, hydrolyzes the pyrophosphate bond of UDP-2,3-diacylglucosamine to yield 2,3-diacylglucosamine 1-phosphate (lipid X) and UMP by catalyzing the attack of water at the alpha-P atom. Involved in the biosynthesis of lipid A, a phosphorylated glycolipid that anchors the lipopolysaccharide to the outer membrane of the cell. The protein is UDP-2,3-diacylglucosamine hydrolase of Aliivibrio fischeri (strain MJ11) (Vibrio fischeri).